A 387-amino-acid chain; its full sequence is Chorismate synthase (387 aa).

2 residues coordinate NADP(+): arginine 39 and arginine 45. Residues 130–132 (RSS), 251–252 (NA), glycine 295, 310–314 (KPIPT), and arginine 336 each bind FMN.

This sequence belongs to the chorismate synthase family. In terms of assembly, homotetramer. The cofactor is FMNH2.

The catalysed reaction is 5-O-(1-carboxyvinyl)-3-phosphoshikimate = chorismate + phosphate. The protein operates within metabolic intermediate biosynthesis; chorismate biosynthesis; chorismate from D-erythrose 4-phosphate and phosphoenolpyruvate: step 7/7. Its function is as follows. Catalyzes the anti-1,4-elimination of the C-3 phosphate and the C-6 proR hydrogen from 5-enolpyruvylshikimate-3-phosphate (EPSP) to yield chorismate, which is the branch point compound that serves as the starting substrate for the three terminal pathways of aromatic amino acid biosynthesis. This reaction introduces a second double bond into the aromatic ring system. The polypeptide is Chorismate synthase (Exiguobacterium sp. (strain ATCC BAA-1283 / AT1b)).